Consider the following 138-residue polypeptide: Large-conductance mechanosensitive channel (138 aa).

Helical transmembrane passes span 15–35 (VDLAVGVIIGSAFGGLVNSVV), 38–58 (IFMPIIGLITGGIDFSNMFIQ), and 80–100 (GNFITLLINFLIISWILFFLV).

The protein belongs to the MscL family. In terms of assembly, homopentamer.

It localises to the cell inner membrane. Its function is as follows. Channel that opens in response to stretch forces in the membrane lipid bilayer. May participate in the regulation of osmotic pressure changes within the cell. This Bartonella bacilliformis (strain ATCC 35685 / KC583 / Herrer 020/F12,63) protein is Large-conductance mechanosensitive channel.